A 405-amino-acid chain; its full sequence is Phosphoglycerate kinase (405 aa).

Substrate-binding positions include 24–26 (DFN), R40, 63–66 (HLGR), R122, and R162. ATP-binding positions include K212, E331, and 361 to 364 (GGDS).

This sequence belongs to the phosphoglycerate kinase family. Monomer.

The protein resides in the cytoplasm. The catalysed reaction is (2R)-3-phosphoglycerate + ATP = (2R)-3-phospho-glyceroyl phosphate + ADP. It functions in the pathway carbohydrate degradation; glycolysis; pyruvate from D-glyceraldehyde 3-phosphate: step 2/5. This Corynebacterium efficiens (strain DSM 44549 / YS-314 / AJ 12310 / JCM 11189 / NBRC 100395) protein is Phosphoglycerate kinase.